The sequence spans 246 residues: Granzyme H (246 aa).

Positions 1 to 18 (MQPFLLLLAFLLTPGAGT) are cleaved as a signal peptide. A propeptide spans 19–20 (EE) (activation peptide). The region spanning 21 to 244 (IIGGHEAKPH…FLPWIKRTMK (224 aa)) is the Peptidase S1 domain. Residues 46-48 (RKR) form a mediates the preference for acidic residues at the P3' and P4' sites region. Cys49 and Cys65 form a disulfide bridge. The active-site Charge relay system is the His64. N-linked (GlcNAc...) asparagine glycans are attached at residues Asn71 and Asn104. The Charge relay system role is filled by Asp108. 2 cysteine pairs are disulfide-bonded: Cys142–Cys208 and Cys172–Cys187. Asn179 carries N-linked (GlcNAc...) asparagine glycosylation. Ser202 acts as the Charge relay system in catalysis.

The protein belongs to the peptidase S1 family. Granzyme subfamily. Constitutively expressed in NK cells.

It is found in the cytolytic granule. With respect to regulation, inhibited by SERPINB1. Its function is as follows. Cytotoxic chymotrypsin-like serine protease with preference for bulky and aromatic residues at the P1 position and acidic residues at the P3' and P4' sites. Probably necessary for target cell lysis in cell-mediated immune responses. Participates in the antiviral response via direct cleavage of several proteins essential for viral replication. This is Granzyme H (GZMH) from Homo sapiens (Human).